A 185-amino-acid chain; its full sequence is MANEIVTTAQERMKHSLASLQRDLGHLRAGRANASLLDRVQVVYYGAPTPLNQLASITIPEARVLMVTPFDKSILKDIEKSLYESDLGITPANDGSVIRLVIPMLTEERRRELVKEMGKYIESAKVAIRNIRRDAMDTAKKSEKAKEITEDDLKDLENEIQKVTDDAVKEADRLASVKEKELLDI.

Belongs to the RRF family.

The protein resides in the cytoplasm. In terms of biological role, responsible for the release of ribosomes from messenger RNA at the termination of protein biosynthesis. May increase the efficiency of translation by recycling ribosomes from one round of translation to another. The protein is Ribosome-recycling factor of Lactococcus lactis subsp. cremoris (strain SK11).